The following is a 32-amino-acid chain: U3-cyrtautoxin-As1a (32 aa).

Disulfide bonds link Cys-4–Cys-19, Cys-11–Cys-24, and Cys-18–Cys-29.

Belongs to the neurotoxin 14 (magi-1) family. It to aptotoxin III. In terms of tissue distribution, expressed by the venom gland.

The protein resides in the secreted. Functionally, is both paralytic and lethal, when injected into lepidopteran larvae. Is a slower acting toxin, being lethal at 24 hours, but not paralytic at 1 hour post-injection. The sequence is that of U3-cyrtautoxin-As1a from Apomastus schlingeri (Trap-door spider).